A 123-amino-acid chain; its full sequence is Small ribosomal subunit protein uS12 (123 aa).

A 3-methylthioaspartic acid modification is found at Asp-89.

The protein belongs to the universal ribosomal protein uS12 family. Part of the 30S ribosomal subunit. Contacts proteins S8 and S17. May interact with IF1 in the 30S initiation complex.

With S4 and S5 plays an important role in translational accuracy. Functionally, interacts with and stabilizes bases of the 16S rRNA that are involved in tRNA selection in the A site and with the mRNA backbone. Located at the interface of the 30S and 50S subunits, it traverses the body of the 30S subunit contacting proteins on the other side and probably holding the rRNA structure together. The combined cluster of proteins S8, S12 and S17 appears to hold together the shoulder and platform of the 30S subunit. This Anaeromyxobacter sp. (strain Fw109-5) protein is Small ribosomal subunit protein uS12.